The primary structure comprises 438 residues: Glutamyl-tRNA reductase (438 aa).

Residues 49–52 (TCNR), serine 109, 114–116 (EGQ), and glutamine 120 contribute to the substrate site. Catalysis depends on cysteine 50, which acts as the Nucleophile. Residue 198 to 203 (GAGRMS) participates in NADP(+) binding.

This sequence belongs to the glutamyl-tRNA reductase family. Homodimer.

It catalyses the reaction (S)-4-amino-5-oxopentanoate + tRNA(Glu) + NADP(+) = L-glutamyl-tRNA(Glu) + NADPH + H(+). Its pathway is porphyrin-containing compound metabolism; protoporphyrin-IX biosynthesis; 5-aminolevulinate from L-glutamyl-tRNA(Glu): step 1/2. The protein operates within porphyrin-containing compound metabolism; chlorophyll biosynthesis. Its function is as follows. Catalyzes the NADPH-dependent reduction of glutamyl-tRNA(Glu) to glutamate 1-semialdehyde (GSA). In Synechococcus sp. (strain WH7803), this protein is Glutamyl-tRNA reductase.